A 100-amino-acid chain; its full sequence is UPF0213 protein FN1575 (100 aa).

Positions 1–77 (MAYYLYMLRC…KYIKKKKENI (77 aa)) constitute a GIY-YIG domain.

Belongs to the UPF0213 family.

The protein is UPF0213 protein FN1575 of Fusobacterium nucleatum subsp. nucleatum (strain ATCC 25586 / DSM 15643 / BCRC 10681 / CIP 101130 / JCM 8532 / KCTC 2640 / LMG 13131 / VPI 4355).